Here is a 200-residue protein sequence, read N- to C-terminus: Probable E3 ubiquitin-protein ligase ATL45 (200 aa).

Residues 26 to 46 (MVVILSALLCALVCVAGLAAV) traverse the membrane as a helical segment. Residues 113–155 (CAICITEFSEGEEIRILPLCSHAFHVACIDKWLTSRSSCPSCR) form an RING-type; atypical zinc finger.

The protein belongs to the RING-type zinc finger family. ATL subfamily. As to quaternary structure, interacts with BIK1.

Its subcellular location is the membrane. The catalysed reaction is S-ubiquitinyl-[E2 ubiquitin-conjugating enzyme]-L-cysteine + [acceptor protein]-L-lysine = [E2 ubiquitin-conjugating enzyme]-L-cysteine + N(6)-ubiquitinyl-[acceptor protein]-L-lysine.. It functions in the pathway protein modification; protein ubiquitination. E3 ubiquitin-protein ligase that possess E3 ubiquitin ligase activity in vitro and mediates protein monoubiquitination. Triggers the monoubiquitination of phosphorylated BIK1 in response to pathogen-associated molecular pattern (PAMP) detection. May be involved in the early steps of the plant defense signaling pathway. This chain is Probable E3 ubiquitin-protein ligase ATL45, found in Arabidopsis thaliana (Mouse-ear cress).